Reading from the N-terminus, the 906-residue chain is Coatomer subunit beta' (906 aa).

WD repeat units lie at residues 13–52 (ARSD…LVKT), 55–94 (VCDL…RVHM), 97–136 (AHSD…SCSQ), 140–180 (GHTH…PNFT), 183–224 (GHEK…CVQT), 227–266 (GHAQ…LEST), 350–388 (SCEI…NKSF), and 390–425 (SAQE…KSFK). The residue at position 627 (Lys-627) is an N6-acetyllysine. The WD 9 repeat unit spans residues 746–783 (IRTGRLPEAAFLARTYLPSQVSRVVKLWRENLSKVNQK). Positions 837 to 863 (EEAKGFQPSRSTAQQELDGKPASPTPV) are disordered. At Ser-859 the chain carries Phosphoserine. Thr-861 carries the post-translational modification Phosphothreonine. Positions 866-890 (ASHTANKEEKSLLELEVDLDNLELV) form a coiled coil.

This sequence belongs to the WD repeat COPB2 family. In terms of assembly, oligomeric complex that consists of at least the alpha, beta, beta', gamma, delta, epsilon and zeta subunits. Probably interacts with PEX11A. Interacts with SCYL1. Interacts with JAGN1.

The protein localises to the cytoplasm. It localises to the cytosol. It is found in the golgi apparatus membrane. Its subcellular location is the cytoplasmic vesicle. The protein resides in the COPI-coated vesicle membrane. In terms of biological role, the coatomer is a cytosolic protein complex that binds to dilysine motifs and reversibly associates with Golgi non-clathrin-coated vesicles, which further mediate biosynthetic protein transport from the ER, via the Golgi up to the trans Golgi network. Coatomer complex is required for budding from Golgi membranes, and is essential for the retrograde Golgi-to-ER transport of dilysine-tagged proteins. In mammals, the coatomer can only be recruited by membranes associated to ADP-ribosylation factors (ARFs), which are small GTP-binding proteins; the complex also influences the Golgi structural integrity, as well as the processing, activity, and endocytic recycling of LDL receptors. Its function is as follows. This coatomer complex protein, essential for Golgi budding and vesicular trafficking, is a selective binding protein (RACK) for protein kinase C, epsilon type. It binds to Golgi membranes in a GTP-dependent manner. This chain is Coatomer subunit beta' (COPB2), found in Pongo abelii (Sumatran orangutan).